The primary structure comprises 1393 residues: DNA-directed RNA polymerase subunit beta'' (1393 aa).

Cysteine 224, cysteine 295, cysteine 302, and cysteine 305 together coordinate Zn(2+).

Belongs to the RNA polymerase beta' chain family. RpoC2 subfamily. In plastids the minimal PEP RNA polymerase catalytic core is composed of four subunits: alpha, beta, beta', and beta''. When a (nuclear-encoded) sigma factor is associated with the core the holoenzyme is formed, which can initiate transcription. Zn(2+) serves as cofactor.

The protein resides in the plastid. It is found in the chloroplast. It catalyses the reaction RNA(n) + a ribonucleoside 5'-triphosphate = RNA(n+1) + diphosphate. DNA-dependent RNA polymerase catalyzes the transcription of DNA into RNA using the four ribonucleoside triphosphates as substrates. This chain is DNA-directed RNA polymerase subunit beta'', found in Manihot esculenta (Cassava).